Consider the following 569-residue polypeptide: GATOR1 complex protein NPRL3 (569 aa).

Disordered regions lie at residues 27–60 and 441–476; these read PFQR…DQDG and TPNA…SGDS. Composition is skewed to polar residues over residues 34–52 and 441–468; these read HPAS…NNTG and TPNA…NSSA. The residue at position 476 (Ser-476) is a Phosphoserine.

It belongs to the NPR3 family. As to quaternary structure, within the GATOR complex, component of the GATOR1 subcomplex, made of DEPDC5, NPRL2 and NPRL3. GATOR1 mediates the strong interaction of the GATOR complex with small GTPases Rag (RagA/RRAGA, RagB/RRAGB, RagC/RRAGC and/or RagD/RRAGD) heterodimers. GATOR1 interacts with GPR155/LYCHOS; interaction takes place in presence of cholesterol and prevents interaction between GATOR1 and KICSTOR.

It is found in the lysosome membrane. As a component of the GATOR1 complex functions as an inhibitor of the amino acid-sensing branch of the mTORC1 pathway. In response to amino acid depletion, the GATOR1 complex has GTPase activating protein (GAP) activity and strongly increases GTP hydrolysis by RagA/RRAGA (or RagB/RRAGB) within heterodimeric Rag complexes, thereby turning them into their inactive GDP-bound form, releasing mTORC1 from lysosomal surface and inhibiting mTORC1 signaling. In the presence of abundant amino acids, the GATOR1 complex is negatively regulated by GATOR2, the other GATOR subcomplex, in this amino acid-sensing branch of the TORC1 pathway. The sequence is that of GATOR1 complex protein NPRL3 from Mus musculus (Mouse).